Reading from the N-terminus, the 157-residue chain is Transcription elongation factor GreA (157 aa).

The stretch at 46-67 (AEYHAARERQSFIEGRIKELED) forms a coiled coil.

It belongs to the GreA/GreB family.

Necessary for efficient RNA polymerase transcription elongation past template-encoded arresting sites. The arresting sites in DNA have the property of trapping a certain fraction of elongating RNA polymerases that pass through, resulting in locked ternary complexes. Cleavage of the nascent transcript by cleavage factors such as GreA or GreB allows the resumption of elongation from the new 3'terminus. GreA releases sequences of 2 to 3 nucleotides. The chain is Transcription elongation factor GreA from Rhodospirillum rubrum (strain ATCC 11170 / ATH 1.1.1 / DSM 467 / LMG 4362 / NCIMB 8255 / S1).